Reading from the N-terminus, the 370-residue chain is uncharacterized protein (370 aa).

M1 carries the post-translational modification N-acetylmethionine.

The protein belongs to the ornithine cyclodeaminase/mu-crystallin family.

This is an uncharacterized protein from Saccharomyces cerevisiae (strain ATCC 204508 / S288c) (Baker's yeast).